The sequence spans 292 residues: UPF0696 protein C11orf68 homolog (292 aa).

Residues 1–10 are compositionally biased toward low complexity; sequence MAAAAAAVAG. The tract at residues 1 to 60 is disordered; it reads MAAAAAAVAGAGRGGGGGAEPRQERSRARGWAGAERSEGRRMEPGEELEEEDSPGGREDG. Residues 35–44 show a composition bias toward basic and acidic residues; that stretch reads ERSEGRRMEP.

The protein belongs to the UPF0696 family.

In Bos taurus (Bovine), this protein is UPF0696 protein C11orf68 homolog.